The primary structure comprises 142 residues: Large ribosomal subunit protein uL13 (142 aa).

The protein belongs to the universal ribosomal protein uL13 family. In terms of assembly, part of the 50S ribosomal subunit.

This protein is one of the early assembly proteins of the 50S ribosomal subunit, although it is not seen to bind rRNA by itself. It is important during the early stages of 50S assembly. The chain is Large ribosomal subunit protein uL13 from Acinetobacter baumannii (strain AB0057).